The following is a 190-amino-acid chain: Imidazoleglycerol-phosphate dehydratase (190 aa).

This sequence belongs to the imidazoleglycerol-phosphate dehydratase family.

The protein localises to the cytoplasm. The enzyme catalyses D-erythro-1-(imidazol-4-yl)glycerol 3-phosphate = 3-(imidazol-4-yl)-2-oxopropyl phosphate + H2O. It participates in amino-acid biosynthesis; L-histidine biosynthesis; L-histidine from 5-phospho-alpha-D-ribose 1-diphosphate: step 6/9. The chain is Imidazoleglycerol-phosphate dehydratase from Aliarcobacter butzleri (strain RM4018) (Arcobacter butzleri).